The primary structure comprises 148 residues: Probable calcium-binding protein CML7 (148 aa).

EF-hand domains lie at 9 to 44, 80 to 115, and 116 to 148; these read EQVASMREAFSLFDTDGDGRIAPSELGVLMRSLGGN, PFDRPLRDAFRVLDKDASGTVSVADLRHVLTSIGEK, and LEPHEFDEWIREVDVAPDGTIRYDDFIRRIVAK. Ca(2+)-binding residues include aspartate 22, aspartate 24, aspartate 26, arginine 28, glutamate 33, aspartate 93, aspartate 95, serine 97, threonine 99, and aspartate 104.

Potential calcium sensor. This chain is Probable calcium-binding protein CML7 (CML7), found in Oryza sativa subsp. japonica (Rice).